Reading from the N-terminus, the 206-residue chain is Ras-related protein Rab-18 (206 aa).

Met1 is modified (N-acetylmethionine). GTP-binding residues include Ser17, Gly20, Lys21, Ser22, Ser23, Asp34, Pro35, Thr40, Gly66, Lys123, and Asp125. Ser22 serves as a coordination point for Mg(2+). 2 short sequence motifs (switch) span residues 31 to 45 (DTFD…GVDF) and 63 to 80 (DTAG…YYRG). Position 40 (Thr40) interacts with Mg(2+). Position 144 is a phosphoserine (Ser144). Residue Ala152 participates in GTP binding. Residue Cys199 is the site of S-palmitoyl cysteine attachment. Cys203 bears the Cysteine methyl ester mark. Residue Cys203 is the site of S-geranylgeranyl cysteine attachment. Positions 204 to 206 (SVL) are cleaved as a propeptide — removed in mature form.

Belongs to the small GTPase superfamily. Rab family. Interacts (in GTP-bound form) with ZFYVE1. Interacts with ZW10 and this interaction is enhanced in the presence of ZFYVE1. Interacts with BSCL2. It depends on Mg(2+) as a cofactor.

The protein resides in the endoplasmic reticulum membrane. It localises to the golgi apparatus. The protein localises to the cis-Golgi network membrane. Its subcellular location is the lipid droplet. It is found in the apical cell membrane. The catalysed reaction is GTP + H2O = GDP + phosphate + H(+). With respect to regulation, regulated by guanine nucleotide exchange factors (GEFs) which promote the exchange of bound GDP for free GTP. Regulated by GTPase activating proteins (GAPs) which increase the GTP hydrolysis activity at the ER membrane. Inhibited by GDP dissociation inhibitors (GDIs) which prevent Rab-GDP dissociation. In terms of biological role, the small GTPases Rab are key regulators of intracellular membrane trafficking, from the formation of transport vesicles to their fusion with membranes. Rabs cycle between an inactive GDP-bound form and an active GTP-bound form that is able to recruit to membranes different sets of downstream effectors directly responsible for vesicle formation, movement, tethering and fusion. RAB18 is required for the localization of ZFYVE1 to lipid droplets and for its function in mediating the formation of endoplasmic reticulum-lipid droplets (ER-LD) contacts. Also required for maintaining endoplasmic reticulum structure. Plays a role in apical endocytosis/recycling. Plays a key role in eye and brain development and neurodegeneration. This is Ras-related protein Rab-18 (RAB18) from Bos taurus (Bovine).